A 240-amino-acid chain; its full sequence is Uridylate kinase (240 aa).

12-15 (KLSG) is a binding site for ATP. Positions 20–25 (GDKGFG) are involved in allosteric activation by GTP. Gly54 is a UMP binding site. ATP-binding residues include Gly55 and Arg59. UMP is bound by residues Asp74 and 135-142 (TGSPYFST). Asn163, Tyr169, and Asp172 together coordinate ATP.

It belongs to the UMP kinase family. In terms of assembly, homohexamer.

It localises to the cytoplasm. It catalyses the reaction UMP + ATP = UDP + ADP. The protein operates within pyrimidine metabolism; CTP biosynthesis via de novo pathway; UDP from UMP (UMPK route): step 1/1. Allosterically activated by GTP. Inhibited by UTP. Functionally, catalyzes the reversible phosphorylation of UMP to UDP. This is Uridylate kinase from Limosilactobacillus reuteri (strain DSM 20016) (Lactobacillus reuteri).